A 269-amino-acid chain; its full sequence is Senescence-associated protein 13 (269 aa).

Position 21–45 (21–45) interacts with NADP(+); it reads LVTGGSKGIGEAVVEELAMLGAKVH. Ser-154 contributes to the substrate binding site. The active-site Proton acceptor is the Tyr-167.

It belongs to the short-chain dehydrogenases/reductases (SDR) family. SDR65C subfamily.

Functionally, unspecific reductase providing both diastereomeric alcohols from the prochiral ketones. Active on cyclic monoterpenes and small flexible lipophilic carbonyls. No activity with tropinone, nitrogen-containing tropinone analogs, tropine or pseudotropine as substrate. This Arabidopsis thaliana (Mouse-ear cress) protein is Senescence-associated protein 13.